A 208-amino-acid chain; its full sequence is Imidazoleglycerol-phosphate dehydratase (208 aa).

This sequence belongs to the imidazoleglycerol-phosphate dehydratase family.

The protein resides in the cytoplasm. It carries out the reaction D-erythro-1-(imidazol-4-yl)glycerol 3-phosphate = 3-(imidazol-4-yl)-2-oxopropyl phosphate + H2O. It functions in the pathway amino-acid biosynthesis; L-histidine biosynthesis; L-histidine from 5-phospho-alpha-D-ribose 1-diphosphate: step 6/9. In Anaeromyxobacter dehalogenans (strain 2CP-1 / ATCC BAA-258), this protein is Imidazoleglycerol-phosphate dehydratase.